The sequence spans 319 residues: Ribosomal RNA small subunit methyltransferase H (319 aa).

Residues 37-39 (GGH), Asp56, Leu90, Asp104, and Gln111 contribute to the S-adenosyl-L-methionine site.

This sequence belongs to the methyltransferase superfamily. RsmH family.

The protein localises to the cytoplasm. It catalyses the reaction cytidine(1402) in 16S rRNA + S-adenosyl-L-methionine = N(4)-methylcytidine(1402) in 16S rRNA + S-adenosyl-L-homocysteine + H(+). Its function is as follows. Specifically methylates the N4 position of cytidine in position 1402 (C1402) of 16S rRNA. The protein is Ribosomal RNA small subunit methyltransferase H of Nocardioides sp. (strain ATCC BAA-499 / JS614).